We begin with the raw amino-acid sequence, 704 residues long: Polyribonucleotide nucleotidyltransferase (704 aa).

2 residues coordinate Mg(2+): aspartate 487 and aspartate 493. The region spanning 554-613 (PRLLTIKIHPDKIREVIGKGGSTIQAITKETGTQIDIQDDGTIIIASVNAIAAQAAKSRI) is the KH domain. One can recognise an S1 motif domain in the interval 623 to 691 (GRIYEGKVAK…KQGRIRLSIK (69 aa)).

This sequence belongs to the polyribonucleotide nucleotidyltransferase family. As to quaternary structure, component of the RNA degradosome, which is a multiprotein complex involved in RNA processing and mRNA degradation. Mg(2+) serves as cofactor.

The protein localises to the cytoplasm. The enzyme catalyses RNA(n+1) + phosphate = RNA(n) + a ribonucleoside 5'-diphosphate. Functionally, involved in mRNA degradation. Catalyzes the phosphorolysis of single-stranded polyribonucleotides processively in the 3'- to 5'-direction. The polypeptide is Polyribonucleotide nucleotidyltransferase (Xanthomonas campestris pv. campestris (strain B100)).